The primary structure comprises 240 residues: Probable transcriptional regulatory protein PBPRB1582 (240 aa).

Belongs to the TACO1 family.

It is found in the cytoplasm. The polypeptide is Probable transcriptional regulatory protein PBPRB1582 (Photobacterium profundum (strain SS9)).